Reading from the N-terminus, the 252-residue chain is Uracil-DNA glycosylase (252 aa).

The Proton acceptor role is filled by aspartate 87.

Belongs to the uracil-DNA glycosylase (UDG) superfamily. UNG family.

It localises to the host nucleus. The enzyme catalyses Hydrolyzes single-stranded DNA or mismatched double-stranded DNA and polynucleotides, releasing free uracil.. Functionally, excises uracil residues from the DNA which can arise as a result of misincorporation of dUMP residues by DNA polymerase or deamination of cytosines. Therefore may reduce deleterious uracil incorporation into the viral genome, particularly in terminally differentiated cells which lack DNA repair enzymes. This Alcelaphine herpesvirus 1 (strain C500) (AlHV-1) protein is Uracil-DNA glycosylase (46).